The primary structure comprises 179 residues: Large ribosomal subunit protein uL5 (179 aa).

This sequence belongs to the universal ribosomal protein uL5 family. In terms of assembly, part of the 50S ribosomal subunit; part of the 5S rRNA/L5/L18/L25 subcomplex. Contacts the 5S rRNA and the P site tRNA. Forms a bridge to the 30S subunit in the 70S ribosome.

In terms of biological role, this is one of the proteins that bind and probably mediate the attachment of the 5S RNA into the large ribosomal subunit, where it forms part of the central protuberance. In the 70S ribosome it contacts protein S13 of the 30S subunit (bridge B1b), connecting the 2 subunits; this bridge is implicated in subunit movement. Contacts the P site tRNA; the 5S rRNA and some of its associated proteins might help stabilize positioning of ribosome-bound tRNAs. In Variovorax paradoxus (strain S110), this protein is Large ribosomal subunit protein uL5.